Consider the following 121-residue polypeptide: UPF0738 protein BLi01253/BL05110 (121 aa).

It belongs to the UPF0738 family.

This chain is UPF0738 protein BLi01253/BL05110, found in Bacillus licheniformis (strain ATCC 14580 / DSM 13 / JCM 2505 / CCUG 7422 / NBRC 12200 / NCIMB 9375 / NCTC 10341 / NRRL NRS-1264 / Gibson 46).